The following is a 392-amino-acid chain: Enoyl-[acyl-carrier-protein] reductase [NADH] (392 aa).

Residues 46 to 51 (GSSSGY), 72 to 73 (LE), 108 to 109 (DA), and 136 to 137 (VA) contribute to the NAD(+) site. Y225 provides a ligand contact to substrate. The active-site Proton donor is Y235. NAD(+) is bound by residues K244 and 273 to 275 (LVT).

Belongs to the TER reductase family. As to quaternary structure, monomer.

The catalysed reaction is a 2,3-saturated acyl-[ACP] + NAD(+) = a (2E)-enoyl-[ACP] + NADH + H(+). It functions in the pathway lipid metabolism; fatty acid biosynthesis. Functionally, involved in the final reduction of the elongation cycle of fatty acid synthesis (FAS II). Catalyzes the reduction of a carbon-carbon double bond in an enoyl moiety that is covalently linked to an acyl carrier protein (ACP). The protein is Enoyl-[acyl-carrier-protein] reductase [NADH] of Streptomyces avermitilis (strain ATCC 31267 / DSM 46492 / JCM 5070 / NBRC 14893 / NCIMB 12804 / NRRL 8165 / MA-4680).